A 220-amino-acid chain; its full sequence is MSLLANDEVYDIVSGFKKVIESAKANFCESVDVAINLNINSSKSDEQVRGAVVLPKGLGREVKVAVFAKGGHLDAAKEAMADIVGDEELIEEIKRKKCKLDVDWCLTTPDFMSSVSSIAKILGPRGLMPNPKFNTVTFELSKAIKVIKSGQIRFKSDKAGIVHAKIGNVKFSIEDLLQNFNAVIGAIKQSKPASVKGVYFKDVFIVSTMGKSVKVESLNN.

It belongs to the universal ribosomal protein uL1 family. In terms of assembly, part of the 50S ribosomal subunit.

Functionally, binds directly to 23S rRNA. The L1 stalk is quite mobile in the ribosome, and is involved in E site tRNA release. Its function is as follows. Protein L1 is also a translational repressor protein, it controls the translation of the L11 operon by binding to its mRNA. The polypeptide is Large ribosomal subunit protein uL1 (Ehrlichia ruminantium (strain Gardel)).